A 276-amino-acid polypeptide reads, in one-letter code: Apulose-4-phosphate transketolase subunit A (276 aa).

The protein belongs to the transketolase family. As to quaternary structure, probable heterodimer composed of AptA and AptB. It depends on thiamine diphosphate as a cofactor.

The enzyme catalyses apulose 4-phosphate + D-glyceraldehyde 3-phosphate = D-xylulose 5-phosphate + dihydroxyacetone phosphate. It participates in carbohydrate metabolism. Its function is as follows. Involved in catabolism of D-apiose. Catalyzes the transfer of the glycolaldehyde group from apulose-4-phosphate to D-glyceraldehyde 3-phosphate, generating dihydroxyacetone phosphate and D-xylulose-5-phosphate. The sequence is that of Apulose-4-phosphate transketolase subunit A from Actinobacillus succinogenes (strain ATCC 55618 / DSM 22257 / CCUG 43843 / 130Z).